Here is a 38-residue protein sequence, read N- to C-terminus: MKVRASVKKLCRNCKIIRREGVVRVICSAEPRHKQRQG.

The protein belongs to the bacterial ribosomal protein bL36 family.

This chain is Large ribosomal subunit protein bL36, found in Ectopseudomonas mendocina (strain ymp) (Pseudomonas mendocina).